The primary structure comprises 214 residues: Probable transaldolase (214 aa).

The active-site Schiff-base intermediate with substrate is Lys83.

It belongs to the transaldolase family. Type 3B subfamily.

It is found in the cytoplasm. The enzyme catalyses D-sedoheptulose 7-phosphate + D-glyceraldehyde 3-phosphate = D-erythrose 4-phosphate + beta-D-fructose 6-phosphate. Its pathway is carbohydrate degradation; pentose phosphate pathway; D-glyceraldehyde 3-phosphate and beta-D-fructose 6-phosphate from D-ribose 5-phosphate and D-xylulose 5-phosphate (non-oxidative stage): step 2/3. Its function is as follows. Transaldolase is important for the balance of metabolites in the pentose-phosphate pathway. This Streptococcus equi subsp. zooepidemicus (strain MGCS10565) protein is Probable transaldolase.